Consider the following 695-residue polypeptide: Threonine--tRNA ligase (695 aa).

Residues Met1–Thr76 form the TGS domain. The tract at residues Asp279 to Pro585 is catalytic. Zn(2+)-binding residues include Cys384, His435, and His562.

It belongs to the class-II aminoacyl-tRNA synthetase family. Homodimer. The cofactor is Zn(2+).

It is found in the cytoplasm. It catalyses the reaction tRNA(Thr) + L-threonine + ATP = L-threonyl-tRNA(Thr) + AMP + diphosphate + H(+). In terms of biological role, catalyzes the attachment of threonine to tRNA(Thr) in a two-step reaction: L-threonine is first activated by ATP to form Thr-AMP and then transferred to the acceptor end of tRNA(Thr). Also edits incorrectly charged L-seryl-tRNA(Thr). The sequence is that of Threonine--tRNA ligase from Leifsonia xyli subsp. xyli (strain CTCB07).